Reading from the N-terminus, the 116-residue chain is Large ribosomal subunit protein uL22c (116 aa).

Belongs to the universal ribosomal protein uL22 family. In terms of assembly, part of the 50S ribosomal subunit.

It is found in the plastid. It localises to the chloroplast. In terms of biological role, this protein binds specifically to 23S rRNA. The globular domain of the protein is located near the polypeptide exit tunnel on the outside of the subunit, while an extended beta-hairpin is found that lines the wall of the exit tunnel in the center of the 70S ribosome. The chain is Large ribosomal subunit protein uL22c (rpl22) from Euglena gracilis.